The chain runs to 239 residues: Ribose-5-phosphate isomerase A (239 aa).

Residues 30-33 (SGST), 87-90 (DGAD), and 100-103 (KGGG) each bind substrate. Residue glutamate 109 is the Proton acceptor of the active site. Residue lysine 127 coordinates substrate.

This sequence belongs to the ribose 5-phosphate isomerase family. In terms of assembly, homodimer.

The enzyme catalyses aldehydo-D-ribose 5-phosphate = D-ribulose 5-phosphate. Its pathway is carbohydrate degradation; pentose phosphate pathway; D-ribose 5-phosphate from D-ribulose 5-phosphate (non-oxidative stage): step 1/1. Functionally, catalyzes the reversible conversion of ribose-5-phosphate to ribulose 5-phosphate. The chain is Ribose-5-phosphate isomerase A from Synechococcus sp. (strain CC9605).